Reading from the N-terminus, the 801-residue chain is MKMTPLMEQYLKIKEQYKDSILLFRLGDFYEAFFEDAKTVSKVLNIVLTKRQDAPMAGIPYHALNTYLKKLVEAGYKVAICDQMEEPSKSKKLIRREVTRVVTPGAIVEDEFLSETNNYMVVLVREKEKYCAVFCDVSTGEVLIHESIDEQEVLDLMKAYSVSEIVCPEGLESEVREKLPGVYIEVIDEWYFSEPEEEVKRIYGIEDIHHFELSSLAMKSLSALIKYIKYTMISEKLNLKPPVTISRKNFMILDSATVENLSLIPGEKGKNLFDVLNHTETPMGARLLKKWILHPLTDRQQIEDRLNAVEKLKEDRLKLEQIRNLLSRVRDVERIVSRVEYNRAIPRDLVALRETLSVVPELNEELSNFDFFEKLNFPDSLFDLLCKAIEDDPAGSPGEGKVIKRGFSPELDEYRDLLEHSEEKLKEFEEREREKTGIQKLKVGYNQVFGYYIEVTKANLDKVPEDYERKQTLVNSERFTTPELKEFETKIMAAKERIEELEKELFRNVCEEVKKHKETLLEISEELARIDVLATLAYDAILYNYTRPTFSEDRMEIIGGRHPVVERFTRDFVENDLYMDDEKRFTVITGPNMSGKSTFIRQVGLISLMAQIGSFVPAKKAVLPVFDRIFTRMGARDDLAGGRSTFLVEMNEMALILLKATKKSLVLLDEVGRGTGTQDGISIAWAISEELISRGCKVLFATHFIELTNLENSFPQVQNKTILVKEEGSNVVFTHRVVDGVADRSYGADRSYGIEVARIAGIPENVIRRAFEIMEKGFKTKSQRKNGKVKKFSQQIPLFPA.

590 to 597 (GPNMSGKS) contributes to the ATP binding site.

This sequence belongs to the DNA mismatch repair MutS family.

This protein is involved in the repair of mismatches in DNA. It is possible that it carries out the mismatch recognition step. This protein has a weak ATPase activity. In Thermotoga neapolitana (strain ATCC 49049 / DSM 4359 / NBRC 107923 / NS-E), this protein is DNA mismatch repair protein MutS.